Consider the following 103-residue polypeptide: Cell division protein FtsB (103 aa).

Residues 1 to 3 (MGK) are Cytoplasmic-facing. A helical membrane pass occupies residues 4 to 21 (LTLLLLAILVWLQYSLWF). At 22 to 103 (GKNGIHDYTR…RAQSAGQNNR (82 aa)) the chain is on the periplasmic side. Residues 31–71 (RVNDDVAAQQATNAKLKARNDQLFAEIDDLNGGQEALEERA) are a coiled coil.

The protein belongs to the FtsB family. As to quaternary structure, part of a complex composed of FtsB, FtsL and FtsQ.

The protein localises to the cell inner membrane. In terms of biological role, essential cell division protein. May link together the upstream cell division proteins, which are predominantly cytoplasmic, with the downstream cell division proteins, which are predominantly periplasmic. In Shigella boydii serotype 18 (strain CDC 3083-94 / BS512), this protein is Cell division protein FtsB.